A 363-amino-acid polypeptide reads, in one-letter code: Probable aminomethyltransferase (363 aa).

This sequence belongs to the GcvT family. As to quaternary structure, the glycine cleavage system is composed of four proteins: P, T, L and H.

The enzyme catalyses N(6)-[(R)-S(8)-aminomethyldihydrolipoyl]-L-lysyl-[protein] + (6S)-5,6,7,8-tetrahydrofolate = N(6)-[(R)-dihydrolipoyl]-L-lysyl-[protein] + (6R)-5,10-methylene-5,6,7,8-tetrahydrofolate + NH4(+). The glycine cleavage system catalyzes the degradation of glycine. The sequence is that of Probable aminomethyltransferase from Halobacterium salinarum (strain ATCC 29341 / DSM 671 / R1).